Here is a 348-residue protein sequence, read N- to C-terminus: MSKQTLILLYGGRSAEREVSVLSAESVMRAVDYNAFEVKTYFITQSGDFIKTQEFIETPGDDEKLMTNDTVEASQAIKPSDIYEEDAVVFPVLHGPMGEDGSIQGFLETLKLPYVGTNVLSSSVAMDKIMTKRILEVAGVPQVAYTVYIEGEDLEAAVAETLEKLTFPVFVKPANMGSSVGISKAENESELRSAIDLALKYDSRILIEQGVVAREIEVGILGNTTVKTTDPGEVVKDVAFYDYQAKYIDNKITMDIPARVPVEVMTQMRAYAAKAFRALGGCGLARCDFFLTEDGAIYLNELNTMPGFTQWSMYPLLWENMGLSYSDIIKELVVLGQEMFDKRESHLI.

Residues 132–334 (KRILEVAGVP…YSDIIKELVV (203 aa)) form the ATP-grasp domain. An ATP-binding site is contributed by 162–217 (LEKLTFPVFVKPANMGSSVGISKAENESELRSAIDLALKYDSRILIEQGVVAREIE). Residues aspartate 288, glutamate 301, and asparagine 303 each coordinate Mg(2+).

It belongs to the D-alanine--D-alanine ligase family. The cofactor is Mg(2+). Mn(2+) is required as a cofactor.

Its subcellular location is the cytoplasm. It catalyses the reaction 2 D-alanine + ATP = D-alanyl-D-alanine + ADP + phosphate + H(+). It functions in the pathway cell wall biogenesis; peptidoglycan biosynthesis. Cell wall formation. In Streptococcus thermophilus (strain CNRZ 1066), this protein is D-alanine--D-alanine ligase.